The primary structure comprises 289 residues: Mitochondrial fission regulator 1-like (289 aa).

T27 carries the post-translational modification Phosphothreonine. 8 positions are modified to phosphoserine: S38, S100, S107, S221, S222, S235, S258, and S270.

It belongs to the MTFR1 family. In terms of processing, phosphorylated by AMPK. Upon stress, phosphorylation by AMPK is sufficient to induce mitochondrial fragmentation.

The protein localises to the mitochondrion outer membrane. Its function is as follows. Mitochondrial protein required for adaptation of miochondrial dynamics to metabolic changes. Regulates mitochondrial morphology at steady state and mediates AMPK-dependent stress-induced mitochondrial fragmentation via the control of OPA1 levels. The protein is Mitochondrial fission regulator 1-like (MTFR1L) of Bos taurus (Bovine).